A 315-amino-acid polypeptide reads, in one-letter code: ADP/ATP translocase (315 aa).

The Mitochondrial intermembrane portion of the chain corresponds to 1-13 (MSNKQETKILGMP). Solcar repeat units follow at residues 13–106 (PPFV…FKAM) and 118–210 (KWMA…IKPV). A helical transmembrane segment spans residues 14–37 (PFVVDFLMGGVSAAVSKTAAAPIE). Lys30 lines the bongkrekate pocket. The Mitochondrial matrix segment spans residues 38–80 (RIKLLVQNQDEMIKAGRLDRRYNGIIDCFRRTTADEGLMALWR). Residues Ile62 and 81–83 (GNT) contribute to the a cardiolipin site. A helical transmembrane segment spans residues 81 to 104 (GNTANVIRYFPTQALNFAFRDKFK). Arg88 provides a ligand contact to ADP. Bongkrekate-binding positions include 88 to 89 (RY) and Asn96. Over 105–115 (AMFGYKKDKDG) the chain is Mitochondrial intermembrane. Residues 116–145 (YAKWMAGNLASGGAAGATSLLFVYSLDYAR) form a helical membrane-spanning segment. Residues 146–184 (TRLANDAKSAKGGGARQFNGLIDVYRKTLASDGIAGLYR) lie on the Mitochondrial matrix side of the membrane. Residues Leu166 and 184–185 (RG) each bind a cardiolipin. A helical transmembrane segment spans residues 185–213 (GFGPSVAGIVVYRGLYFGMYDSIKPVVLV). 196-197 (YR) is a bongkrekate binding site. Over 214–216 (GPL) the chain is Mitochondrial intermembrane. Residues 217–242 (ANNFLASFLLGWCVTTGAGIASYPLD) form a helical membrane-spanning segment. The Solcar repeat unit spans residues 218 to 304 (NNFLASFLLG…LSIYDQLQIL (87 aa)). The Mitochondrial matrix portion of the chain corresponds to 243-283 (TVRRRMMMTSGEAVKYKSSIDAFRQIIAKEGVKSLFKGAGA). Residue Arg245 coordinates ADP. The Nucleotide carrier signature motif motif lies at 245–250 (RRRMMM). Residues 260-261 (SS) and 280-282 (GAG) contribute to the a cardiolipin site. The helical transmembrane segment at 284 to 304 (NILRGVAGAGVLSIYDQLQIL) threads the bilayer. The Mitochondrial intermembrane segment spans residues 305–315 (LFGKAFKGGSG).

Belongs to the mitochondrial carrier (TC 2.A.29) family. In terms of assembly, monomer.

It is found in the mitochondrion inner membrane. The enzyme catalyses ADP(in) + ATP(out) = ADP(out) + ATP(in). The matrix-open state (m-state) is inhibited by the membrane-permeable bongkrekic acid (BKA). The cytoplasmic-open state (c-state) is inhibited by the membrane-impermeable toxic inhibitor carboxyatractyloside (CATR). Functionally, ADP:ATP antiporter that mediates import of ADP into the mitochondrial matrix for ATP synthesis, and export of ATP out to fuel the cell. Cycles between the cytoplasmic-open state (c-state) and the matrix-open state (m-state): operates by the alternating access mechanism with a single substrate-binding site intermittently exposed to either the cytosolic (c-state) or matrix (m-state) side of the inner mitochondrial membrane. The polypeptide is ADP/ATP translocase (Thermothelomyces thermophilus (strain ATCC 42464 / BCRC 31852 / DSM 1799) (Sporotrichum thermophile)).